Consider the following 198-residue polypeptide: Molybdopterin synthase catalytic subunit (198 aa).

A compositionally biased stretch (low complexity) spans 1–27 (MASQPPQEPTPTATSTPSTSALASLPP). Residues 1–40 (MASQPPQEPTPTATSTPSTSALASLPPHLDPTTYPRTLTS) form a disordered region. Substrate is bound by residues 143–144 (HR), K159, and 166–168 (KRE). A disordered region spans residues 176–198 (EWRENRERDAEGKVVAEKQEERE).

The protein belongs to the MoaE family. MOCS2B subfamily. In terms of assembly, heterotetramer; composed of 2 small (MOCS2A) and 2 large (MOCS2B) subunits.

It is found in the cytoplasm. The catalysed reaction is 2 [molybdopterin-synthase sulfur-carrier protein]-C-terminal-Gly-aminoethanethioate + cyclic pyranopterin phosphate + H2O = molybdopterin + 2 [molybdopterin-synthase sulfur-carrier protein]-C-terminal Gly-Gly + 2 H(+). It participates in cofactor biosynthesis; molybdopterin biosynthesis. Its function is as follows. Catalytic subunit of the molybdopterin synthase complex, a complex that catalyzes the conversion of precursor Z into molybdopterin. Acts by mediating the incorporation of 2 sulfur atoms from thiocarboxylated MOCS2A into precursor Z to generate a dithiolene group. This Aspergillus clavatus (strain ATCC 1007 / CBS 513.65 / DSM 816 / NCTC 3887 / NRRL 1 / QM 1276 / 107) protein is Molybdopterin synthase catalytic subunit.